Reading from the N-terminus, the 420-residue chain is POU domain, class 4, transcription factor 1 (420 aa).

Positions 57–66 (RAEALAAVDI) match the POU-IV box motif. 2 disordered regions span residues 94–117 (STVPLAHHHHHHHHHQALEPGDLL) and 132–200 (GGAG…XGHL). The span at 99-108 (AHHHHHHHHH) shows a compositional bias: basic residues. Composition is skewed to gly residues over residues 132 to 165 (GGAGAAGGGGAPTRPRGAGGPGGGGGPGGGGPGV) and 172 to 184 (PGGGGGGPGGGLL). The POU-specific domain occupies 261–338 (DSDTDPRELE…ILQAWLEEAE (78 aa)). A DNA-binding region (homeobox) is located at residues 356 to 415 (KKRKRTSIAAPEKRSLEAYFAVQPRPSSEKIAAIAEKLDLKKNVVRVWFCNQRQKQKRMK).

This sequence belongs to the POU transcription factor family. Class-4 subfamily. As to quaternary structure, interacts (via N-terminus) with RIT2; the interaction controls POU4F1 transactivation activity on some neuronal target genes. Isoform 1 interacts with POU4F2; this interaction inhibits both POU4F1 DNA-binding and transcriptional activities. Isoform 1 interacts (C-terminus) with ESR1 (via DNA-binding domain); this interaction decreases the estrogen receptor ESR1 transcriptional activity in a DNA- and ligand 17-beta-estradiol-independent manner. In terms of tissue distribution, detected in brain, spinal cord and dorsal root ganglion. Isoform 2 is detected in brain, spinal cord, dorsal root ganglion and spleen.

The protein resides in the nucleus. Its subcellular location is the cytoplasm. Functionally, multifunctional transcription factor with different regions mediating its different effects. Acts by binding (via its C-terminal domain) to sequences related to the consensus octamer motif 5'-ATGCAAAT-3' in the regulatory regions of its target genes. Regulates the expression of specific genes involved in differentiation and survival within a subset of neuronal lineages. It has been shown that activation of some of these genes requires its N-terminal domain, maybe through a neuronal-specific cofactor. Activates BCL2 expression and protects neuronal cells from apoptosis (via the N-terminal domain). Induces neuronal process outgrowth and the coordinate expression of genes encoding synaptic proteins. Exerts its major developmental effects in somatosensory neurons and in brainstem nuclei involved in motor control. Stimulates the binding affinity of the nuclear estrogene receptor ESR1 to DNA estrogen response element (ERE), and hence modulates ESR1-induced transcriptional activity. May positively regulate POU4F2 and POU4F3. Regulates dorsal root ganglion sensory neuron specification and axonal projection into the spinal cord. Plays a role in TNFSF11-mediated terminal osteoclast differentiation. Negatively regulates its own expression interacting directly with a highly conserved autoregulatory domain surrounding the transcription initiation site. In terms of biological role, able to act as transcription factor, cannot regulate the expression of the same subset of genes than isoform 1. Does not have anitapoptotic effect on neuronal cells. The polypeptide is POU domain, class 4, transcription factor 1 (Pou4f1) (Rattus norvegicus (Rat)).